A 327-amino-acid polypeptide reads, in one-letter code: E3 ubiquitin ligase RNF121 (327 aa).

Alanine 2 carries the N-acetylalanine modification. The next 5 helical transmembrane spans lie at 50–70, 79–99, 100–120, 148–168, and 172–192; these read MHAE…LLLV, SYNM…TVKL, HWWR…FVTF, ATGI…NLLF, and PEDA…YGVL. The segment at 226-276 adopts an RING-type; atypical zinc-finger fold; it reads CAVCGQQIFVDVSEEGIIENTYRLSCNHVFHEFCIRGWCIVGKKQTCPYCK. The helical transmembrane segment at 306–326 threads the bilayer; the sequence is LVAWQPVIIGVVQGINYILGL.

This sequence belongs to the RNF121 family.

The protein localises to the endoplasmic reticulum membrane. The enzyme catalyses S-ubiquitinyl-[E2 ubiquitin-conjugating enzyme]-L-cysteine + [acceptor protein]-L-lysine = [E2 ubiquitin-conjugating enzyme]-L-cysteine + N(6)-ubiquitinyl-[acceptor protein]-L-lysine.. It participates in protein modification; protein ubiquitination. In terms of biological role, E3 ubiquitin ligase which accepts ubiquitin and transfers it to substrates thereby promoting their degradation by the endoplasmic reticulum-associated degradation (ERAD) pathway which is a pathway involved in ubiquitin-dependent degradation of misfolded endoplasmic reticulum proteins. May regulate the unfolded protein response to reduce endoplasmic reticulum stress. The protein is E3 ubiquitin ligase RNF121 (RNF121) of Homo sapiens (Human).